A 584-amino-acid polypeptide reads, in one-letter code: Protein phosphatase 2A scaffold subunit (584 aa).

HEAT repeat units follow at residues 7 to 45 (ESDD…ALGP), 46 to 84 (ERTR…FVGG), 86 to 123 (EHAV…EIPT), 168 to 206 (LRKT…VKSE), 207 to 239 (ILPL…MLTN), 240 to 278 (EENI…SMGT), 279 to 317 (EITK…LLTK), 318 to 356 (EMNI…IYGK), 358 to 395 (DTLT…VIGI), 397 to 434 (MLSQ…QLGV), 441 to 479 (LGNL…AKNN), 480 to 512 (IIPK…VVGG), 513 to 551 (DVIS…LLDS), and 553 to 584 (IVQS…LQLC).

Belongs to the phosphatase 2A regulatory subunit A family. As to quaternary structure, component of the Sca1 complex composed of at least gefA, gefH, scaA, phr, and the protein phosphatase 2A subunits pppA and pho2B.

It is found in the cytoplasm. It localises to the cytosol. The protein resides in the cell membrane. Scaffolding molecule which may coordinate the assembly of the catalytic subunit and a variable regulatory B subunit. Component of the Sca1 complex, a regulator of cell motility, chemotaxis and signal relay. The Sca1 complex is recruited to the plasma membrane in a chemoattractant- and F-actin-dependent manner and is enriched at the leading edge of chemotaxing cells where it regulates F-actin dynamics and signal relay by controlling the activation of rasC and the downstream target of rapamycin complex 2 (TORC2)-Akt/protein kinase B (PKB) pathway. This Dictyostelium discoideum (Social amoeba) protein is Protein phosphatase 2A scaffold subunit (pppA).